Consider the following 255-residue polypeptide: 5'-nucleotidase SurE (255 aa).

Asp16, Asp17, Ser47, and Asn100 together coordinate a divalent metal cation.

It belongs to the SurE nucleotidase family. A divalent metal cation serves as cofactor.

The protein resides in the cytoplasm. The enzyme catalyses a ribonucleoside 5'-phosphate + H2O = a ribonucleoside + phosphate. In terms of biological role, nucleotidase that shows phosphatase activity on nucleoside 5'-monophosphates. In Vibrio vulnificus (strain YJ016), this protein is 5'-nucleotidase SurE.